Here is a 794-residue protein sequence, read N- to C-terminus: MIITRNWLKKYLNLDNISNDQINVALNSLGFEVDNVYDLNSLNSELVLGYVEQSKQIPDTHLKLNKVNIGTKSLQIVCGASNVDVNQFVIVAPINATIANGLTLTSKKIQNYESQGMICALNEIGINQSVINKEDQLKIYNVFDKNLDLKKYLGKDVKQIIGLDDYLFEIDLTLNRSDCLASFQILKELANYFDLEIKNYDNKFNDFKENDLDLKITISKKIEEQIKTISYSNFVLNNHLNKLDSIDDIFLKLNQISSTNNLINDLSLLSTLSTAQTHILIDLDKLKSFNLKLELINHNDKELLCLTSDNQIVNIIGLQTESKFSIDNNSKNVLNIMVNIEPNLMRKQQKLLNTSNINLQRYIKPINPNLFDLANLNLTSLLNSYNLVNKAYKVKVLKQTYKNKTEFEIKISEINDLLGTNLTIDQIKSLFKKLDFKITNKNDLLTFNIDPNRIDISSKNDLCEEVARLYSYDNIQEVALSFTSFKKPKNLNLKLENKLTNYLIGLGFNNTKTYSLTTQIDAKHWNLFNISDFINLLSPLSNLRQTYRTSLSKSLIDTAIYNHSINNKELKLFEIADIYNLNQLKQRHLVFLTSHHIYKNGLTHQLVENNFYYNKEILESIFDLYNLDFSQIKYVNNLDVIKEIHLYINATIYYQKQLVGFIYQLNPKFESENKLNKTFVCEINLDVLNELKNKTIEAKTLSKFQSSSRDLTIEISNDLIYQDVLLKAISDVKYITSSKVVDLYLDDKLAKNNTKALTIQFIFNDLDHQLTEAEINTEFEKIISNVKKMKVVIR.

In terms of domain architecture, tRNA-binding spans 40-158 (NSLNSELVLG…LKKYLGKDVK (119 aa)). Positions 402 to 477 (KNKTEFEIKI…RLYSYDNIQE (76 aa)) constitute a B5 domain. The Mg(2+) site is built by aspartate 455, aspartate 461, glutamate 464, and glutamate 465. Residues 702-794 (SKFQSSSRDL…NVKKMKVVIR (93 aa)) enclose the FDX-ACB domain.

Belongs to the phenylalanyl-tRNA synthetase beta subunit family. Type 1 subfamily. As to quaternary structure, tetramer of two alpha and two beta subunits. The cofactor is Mg(2+).

It localises to the cytoplasm. The enzyme catalyses tRNA(Phe) + L-phenylalanine + ATP = L-phenylalanyl-tRNA(Phe) + AMP + diphosphate + H(+). The sequence is that of Phenylalanine--tRNA ligase beta subunit from Mycoplasma capricolum subsp. capricolum (strain California kid / ATCC 27343 / NCTC 10154).